We begin with the raw amino-acid sequence, 507 residues long: Dihydrolipoyl dehydrogenase 2, mitochondrial (507 aa).

Residues 1 to 36 (MAMASLARRKAYFLTRNISNSPTDAFRFSFSLTRGF) constitute a mitochondrion transit peptide. FAD-binding positions include 73–82 (EKRGALGGTC), Lys-91, Gly-155, and 184–186 (TGS). A disulfide bridge links Cys-82 with Cys-87. NAD(+)-binding positions include 221–228 (GAGYIGLE), Glu-244, Val-278, and Gly-313. Residues Asp-354 and 360–363 (MLAH) contribute to the FAD site. His-486 (proton acceptor) is an active-site residue.

Belongs to the class-I pyridine nucleotide-disulfide oxidoreductase family. As to quaternary structure, homodimer. Part of both the glycine cleavage system composed of four proteins: P, T, L and H and of the pyruvate dehydrogenase complex containing multiple copies of three enzymatic components: pyruvate dehydrogenase (E1), dihydrolipoamide acetyltransferase (E2) and lipoamide dehydrogenase (E3). It depends on FAD as a cofactor. S-nytrosylated at unknown positions. In terms of tissue distribution, preferentially expressed in roots, flowers and siliques and at a lower level in stems and leaves.

Its subcellular location is the mitochondrion matrix. It catalyses the reaction N(6)-[(R)-dihydrolipoyl]-L-lysyl-[protein] + NAD(+) = N(6)-[(R)-lipoyl]-L-lysyl-[protein] + NADH + H(+). Functionally, lipoamide dehydrogenase is a component of the glycine decarboxylase (GDC) or glycine cleavage system as well as of the alpha-ketoacid dehydrogenase complexes. LPD1 is probably the protein most often associated with the glycine decarboxylase complex while LPD2 is probably incorporated into alpha-ketoacid dehydrogenase complexes. The protein is Dihydrolipoyl dehydrogenase 2, mitochondrial (LPD2) of Arabidopsis thaliana (Mouse-ear cress).